We begin with the raw amino-acid sequence, 303 residues long: 4-hydroxy-3-methylbut-2-enyl diphosphate reductase (303 aa).

Cys12 is a binding site for [4Fe-4S] cluster. (2E)-4-hydroxy-3-methylbut-2-enyl diphosphate contacts are provided by His42 and His75. His42 and His75 together coordinate dimethylallyl diphosphate. The isopentenyl diphosphate site is built by His42 and His75. [4Fe-4S] cluster is bound at residue Cys97. His125 serves as a coordination point for (2E)-4-hydroxy-3-methylbut-2-enyl diphosphate. His125 lines the dimethylallyl diphosphate pocket. His125 serves as a coordination point for isopentenyl diphosphate. The Proton donor role is filled by Glu127. Residue Ser164 participates in (2E)-4-hydroxy-3-methylbut-2-enyl diphosphate binding. Cys192 lines the [4Fe-4S] cluster pocket. (2E)-4-hydroxy-3-methylbut-2-enyl diphosphate contacts are provided by Ser220, Ser221, Asn222, and Ser264. Ser220, Ser221, Asn222, and Ser264 together coordinate dimethylallyl diphosphate. Ser220, Ser221, Asn222, and Ser264 together coordinate isopentenyl diphosphate.

The protein belongs to the IspH family. The cofactor is [4Fe-4S] cluster.

It carries out the reaction isopentenyl diphosphate + 2 oxidized [2Fe-2S]-[ferredoxin] + H2O = (2E)-4-hydroxy-3-methylbut-2-enyl diphosphate + 2 reduced [2Fe-2S]-[ferredoxin] + 2 H(+). The catalysed reaction is dimethylallyl diphosphate + 2 oxidized [2Fe-2S]-[ferredoxin] + H2O = (2E)-4-hydroxy-3-methylbut-2-enyl diphosphate + 2 reduced [2Fe-2S]-[ferredoxin] + 2 H(+). Its pathway is isoprenoid biosynthesis; dimethylallyl diphosphate biosynthesis; dimethylallyl diphosphate from (2E)-4-hydroxy-3-methylbutenyl diphosphate: step 1/1. It participates in isoprenoid biosynthesis; isopentenyl diphosphate biosynthesis via DXP pathway; isopentenyl diphosphate from 1-deoxy-D-xylulose 5-phosphate: step 6/6. In terms of biological role, catalyzes the conversion of 1-hydroxy-2-methyl-2-(E)-butenyl 4-diphosphate (HMBPP) into a mixture of isopentenyl diphosphate (IPP) and dimethylallyl diphosphate (DMAPP). Acts in the terminal step of the DOXP/MEP pathway for isoprenoid precursor biosynthesis. This Neorickettsia sennetsu (strain ATCC VR-367 / Miyayama) (Ehrlichia sennetsu) protein is 4-hydroxy-3-methylbut-2-enyl diphosphate reductase.